The primary structure comprises 586 residues: Dual specificity tyrosine-phosphorylation-regulated kinase 3 (586 aa).

Residues 1–13 (MGGAARDRGRKDA) show a composition bias toward basic and acidic residues. The interval 1-187 (MGGAARDRGR…QGVIGGPNNG (187 aa)) is disordered. One can recognise a Protein kinase domain in the interval 208-521 (YEVLKIIGKG…PAQALRHPWI (314 aa)). Residues 214-222 (IGKGSFGQV), Lys-237, and 287-290 (FELL) each bind ATP. Residue Asp-334 is the Proton acceptor of the active site. Phosphotyrosine is present on Tyr-368. The Nuclear localization signal motif lies at 467-480 (RSRRGKKRGPPGSK).

This sequence belongs to the protein kinase superfamily. CMGC Ser/Thr protein kinase family. MNB/DYRK subfamily. In terms of assembly, interacts with SIRT1. It depends on Mg(2+) as a cofactor. Post-translationally, ubiquitinated at anaphase by the anaphase-promoting complex (APC/C), leading to its degradation by the proteasome. Protein kinase activity is activated following autophosphorylation at Tyr-368.

The protein resides in the nucleus. The protein localises to the cytoplasm. It localises to the nucleus speckle. Its subcellular location is the cytoplasmic granule. It is found in the cytoskeleton. The protein resides in the microtubule organizing center. The protein localises to the centrosome. The enzyme catalyses L-seryl-[protein] + ATP = O-phospho-L-seryl-[protein] + ADP + H(+). It catalyses the reaction L-threonyl-[protein] + ATP = O-phospho-L-threonyl-[protein] + ADP + H(+). It carries out the reaction L-tyrosyl-[protein] + ATP = O-phospho-L-tyrosyl-[protein] + ADP + H(+). Its activity is regulated as follows. Protein kinase activity is activated following autophosphorylation at Tyr-368. Functionally, dual-specificity protein kinase that promotes disassembly of several types of membraneless organelles during mitosis, such as stress granules, nuclear speckles and pericentriolar material. Dual-specificity tyrosine-regulated kinases (DYRKs) autophosphorylate a critical tyrosine residue in their activation loop and phosphorylate their substrate on serine and threonine residues. Acts as a central dissolvase of membraneless organelles during the G2-to-M transition, after the nuclear-envelope breakdown: acts by mediating phosphorylation of multiple serine and threonine residues in unstructured domains of proteins, such as SRRM1 and PCM1. Does not mediate disassembly of all membraneless organelles: disassembly of P-body and nucleolus is not regulated by DYRK3. Dissolution of membraneless organelles at the onset of mitosis is also required to release mitotic regulators, such as ZNF207, from liquid-unmixed organelles where they are sequestered and keep them dissolved during mitosis. Regulates mTORC1 by mediating the dissolution of stress granules: during stressful conditions, DYRK3 partitions from the cytosol to the stress granule, together with mTORC1 components, which prevents mTORC1 signaling. When stress signals are gone, the kinase activity of DYRK3 is required for the dissolution of stress granule and mTORC1 relocation to the cytosol: acts by mediating the phosphorylation of the mTORC1 inhibitor AKT1S1, allowing full reactivation of mTORC1 signaling. Also acts as a negative regulator of EPO-dependent erythropoiesis: may place an upper limit on red cell production during stress erythropoiesis. Inhibits cell death due to cytokine withdrawal in hematopoietic progenitor cells. Promotes cell survival upon genotoxic stress through phosphorylation of SIRT1: this in turn inhibits p53/TP53 activity and apoptosis. This is Dual specificity tyrosine-phosphorylation-regulated kinase 3 from Mus musculus (Mouse).